A 644-amino-acid polypeptide reads, in one-letter code: Exoribonuclease 2 (644 aa).

The region spanning 189-516 (REDLTALDFV…NHRLLKAVIK (328 aa)) is the RNB domain. Residues 561–643 (DTRFAAEIVD…ETRSIIARPV (83 aa)) enclose the S1 motif domain.

This sequence belongs to the RNR ribonuclease family. RNase II subfamily.

Its subcellular location is the cytoplasm. The catalysed reaction is Exonucleolytic cleavage in the 3'- to 5'-direction to yield nucleoside 5'-phosphates.. Its function is as follows. Involved in mRNA degradation. Hydrolyzes single-stranded polyribonucleotides processively in the 3' to 5' direction. The chain is Exoribonuclease 2 from Escherichia coli O45:K1 (strain S88 / ExPEC).